A 656-amino-acid chain; its full sequence is Rab proteins geranylgeranyltransferase component A 2 (656 aa).

Disordered regions lie at residues 188-209 (MHTV…EDKA) and 609-656 (PPPN…HLQN). Basic and acidic residues predominate over residues 639–656 (ESSEESKNLESPEKHLQN). Position 649 is a phosphoserine (Ser649).

It belongs to the Rab GDI family. Monomer. Heterotrimer composed of RABGGTA, RABGGTB and CHML; within this trimer, RABGGTA and RABGGTB form the catalytic component B, while CHML (component A) mediates Rab protein binding. Interacts with RAB1A, RAB7A and RAB27A, but has much lower affinity for RAB1A, RAB7A and RAB27A than CHM. Interacts with the non-phosphorylated forms of RAB3A, RAB3B, RAB3C, RAB3D, RAB5B, RAB5C, RAB8A, RAB8B, RAB10, RAB12, RAB35, and RAB43.

It is found in the cytoplasm. It localises to the cytosol. Substrate-binding subunit (component A) of the Rab geranylgeranyltransferase (GGTase) complex. Binds unprenylated Rab proteins and presents the substrate peptide to the catalytic component B. The component A is thought to be regenerated by transferring its prenylated Rab back to the donor membrane. Less effective than CHM in supporting prenylation of Rab3 family. The polypeptide is Rab proteins geranylgeranyltransferase component A 2 (CHML) (Homo sapiens (Human)).